Consider the following 62-residue polypeptide: Phospholipase A2 superbin a (62 aa).

3 residues coordinate Ca(2+): tyrosine 28, glycine 30, and glycine 32. Cysteine 29 and cysteine 45 are oxidised to a cystine. The active site involves histidine 48. Aspartate 49 is a Ca(2+) binding site.

Ca(2+) is required as a cofactor. Expressed by the venom gland.

Its subcellular location is the secreted. The enzyme catalyses a 1,2-diacyl-sn-glycero-3-phosphocholine + H2O = a 1-acyl-sn-glycero-3-phosphocholine + a fatty acid + H(+). In terms of biological role, snake venom phospholipase A2 (PLA2) that inhibits collagen-induced platelet aggregation. In terms of inhibition of platelet aggregation, superbin a is more potent as superbin b, c, and d. PLA2 catalyzes the calcium-dependent hydrolysis of the 2-acyl groups in 3-sn-phosphoglycerides. This is Phospholipase A2 superbin a from Austrelaps superbus (Lowland copperhead snake).